A 209-amino-acid polypeptide reads, in one-letter code: MSGKKRTASSNRWMLEHFDDHYVKLAQKRGLRSRAAFKLEELQQKDQLIRPGMTVVDLGAAPGGWSQVAVKLVGDRGKVIACDILPMDPIVGVDFLQGDFREEKVLEALLTRVGADKVDVVLSDMAPNMSGSDGVDQPRAMYLVELALDMCHQVLAPNGSFAVKVFQGEGFDEYMKAVKEAFKVVKTRKPDSSRARSREVYLVATGYKL.

G63, W65, D83, D99, and D124 together coordinate S-adenosyl-L-methionine. Residue K164 is the Proton acceptor of the active site.

The protein belongs to the class I-like SAM-binding methyltransferase superfamily. RNA methyltransferase RlmE family.

It localises to the cytoplasm. The enzyme catalyses uridine(2552) in 23S rRNA + S-adenosyl-L-methionine = 2'-O-methyluridine(2552) in 23S rRNA + S-adenosyl-L-homocysteine + H(+). Specifically methylates the uridine in position 2552 of 23S rRNA at the 2'-O position of the ribose in the fully assembled 50S ribosomal subunit. In Shewanella putrefaciens (strain CN-32 / ATCC BAA-453), this protein is Ribosomal RNA large subunit methyltransferase E.